Consider the following 525-residue polypeptide: Arylsulfatase G (525 aa).

The N-terminal stretch at 1–16 is a signal peptide; the sequence is MGWLFLKVLLVGMAFS. Ca(2+) is bound by residues Asp44, Asp45, and Cys84. Cys84 (nucleophile) is an active-site residue. Cys84 is modified (3-oxoalanine (Cys)). The N-linked (GlcNAc...) asparagine glycan is linked to Asn117. Lys137 lines the substrate pocket. The active site involves His139. Ser162 lines the substrate pocket. Asn215 is a glycosylation site (N-linked (GlcNAc...) asparagine). His251 is a binding site for substrate. Asp302 and Asn303 together coordinate Ca(2+). 2 N-linked (GlcNAc...) asparagine glycosylation sites follow: Asn356 and Asn497.

The protein belongs to the sulfatase family. The cofactor is Ca(2+). In terms of processing, N-glycosylated with both high mannose and complex type sugars. The conversion to 3-oxoalanine (also known as C-formylglycine, FGly), of a serine or cysteine residue in prokaryotes and of a cysteine residue in eukaryotes, is critical for catalytic activity. Post-translationally, the 63-kDa precursor undergoes proteolytic processing in two steps, yielding two fragments in the first step (apparent molecular masses of 44 and 18 kDa). In the second step, the 44-kDa fragment is processed further to the 34- and 10-kDa chains. The 10-kDa chain is a cleavage product of the 44-kDa fragment but linked to the 18-kDa chain through a disulfide bridge. As to expression, highly expressed in the spleen, kidney, liver, brain, and testis (at protein level).

It localises to the lysosome. The enzyme catalyses an aryl sulfate + H2O = a phenol + sulfate + H(+). It carries out the reaction Hydrolysis of the 3-sulfate groups of the N-sulfo-D-glucosamine 3-O-sulfate units of heparin.. Functionally, displays arylsulfatase activity at acidic pH towards the artificial substrate p-nitrocatechol sulfate. Catalyzes the hydrolysis of the 3-sulfate groups of the N-sulfo-D-glucosamine 3-O-sulfate units of heparin. In Mus musculus (Mouse), this protein is Arylsulfatase G (Arsg).